Reading from the N-terminus, the 174-residue chain is Thioredoxin O, mitochondrial (174 aa).

The N-terminal 59 residues, 1–59, are a transit peptide targeting the mitochondrion; the sequence is MALAHRLCRLPRLLPLAAAAAASKPYLPGKPSPAPPPPLSSPPPFPSLSRLFSTTPSSS. The Thioredoxin domain occupies 60-172; that stretch reads GDSSMVVVGS…LESTMESLHK (113 aa). Active-site nucleophile residues include cysteine 96 and cysteine 99. Cysteine 96 and cysteine 99 form a disulfide bridge.

It belongs to the thioredoxin family. Plant O-type subfamily.

It localises to the mitochondrion. In terms of biological role, probable thiol-disulfide oxidoreductase that may participate in various redox reactions. The chain is Thioredoxin O, mitochondrial from Oryza sativa subsp. japonica (Rice).